Consider the following 448-residue polypeptide: Chromosomal replication initiator protein DnaA (448 aa).

Positions Met-1–Lys-73 are domain I, interacts with DnaA modulators. The tract at residues Lys-73–Thr-109 is domain II. The interval Met-110 to Ser-326 is domain III, AAA+ region. The ATP site is built by Gly-154, Gly-156, Lys-157, and Thr-158. The segment at Ser-327 to Lys-448 is domain IV, binds dsDNA.

The protein belongs to the DnaA family. As to quaternary structure, oligomerizes as a right-handed, spiral filament on DNA at oriC.

Its subcellular location is the cytoplasm. Its function is as follows. Plays an essential role in the initiation and regulation of chromosomal replication. ATP-DnaA binds to the origin of replication (oriC) to initiate formation of the DNA replication initiation complex once per cell cycle. Binds the DnaA box (a 9 base pair repeat at the origin) and separates the double-stranded (ds)DNA. Forms a right-handed helical filament on oriC DNA; dsDNA binds to the exterior of the filament while single-stranded (ss)DNA is stabiized in the filament's interior. The ATP-DnaA-oriC complex binds and stabilizes one strand of the AT-rich DNA unwinding element (DUE), permitting loading of DNA polymerase. After initiation quickly degrades to an ADP-DnaA complex that is not apt for DNA replication. Binds acidic phospholipids. The protein is Chromosomal replication initiator protein DnaA of Clostridium botulinum (strain ATCC 19397 / Type A).